The chain runs to 580 residues: Glyco-Gag protein (580 aa).

At 1–51 (MSGASSGTAIGAHLFGVSPEYRVLIGDGGAGPSKSLSEVSFSVWYRSRAAR) the chain is on the cytoplasmic side. A helical membrane pass occupies residues 52-72 (LVILCLVASFLVPCLTFLIAE). At 73 to 580 (AVMGQTVTTP…ANSTLLNLED (508 aa)) the chain is on the extracellular side. Asn134 carries N-linked (GlcNAc...) asparagine; by host glycosylation. Disordered stretches follow at residues 171 to 282 (VRPF…NRPQ), 491 to 514 (ETPEEREERLWQRQEERDKKRHKE), and 560 to 580 (RDCPKRPRKKPANSTLLNLED). A compositionally biased stretch (pro residues) spans 174–193 (FLPPPKPPTPLPQPLSPQPS). Over residues 194 to 203 (APLTSSLYPV) the composition is skewed to low complexity. 2 stretches are compositionally biased toward pro residues: residues 204-220 (VPKPDPPKPPVLPPDPS) and 230-245 (EPPPYPGGHGPPPSGP). The span at 491–508 (ETPEEREERLWQRQEERD) shows a compositional bias: basic and acidic residues. Positions 571–580 (ANSTLLNLED) are enriched in polar residues. Asn572 is a glycosylation site (N-linked (GlcNAc...) asparagine; by host).

In terms of processing, glycosylated by host. Post-translationally, cleaved by host near the middle of the molecule, releasing the c-terminal half containing capsid and nucleoprotein domains op GAG.

It localises to the host cell membrane. In terms of biological role, plays a role in viral particle release. Presumably acts by facilitating the fission of the virion bud at the cell surface. In Feline leukemia virus, this protein is Glyco-Gag protein.